Consider the following 309-residue polypeptide: RING finger protein mug145 (309 aa).

The helical transmembrane segment at 23–43 (ILLFALVIILSVIFINFFFFY) threads the bilayer. The RING-type; atypical zinc finger occupies 205–247 (CIICYADYAFDDILRVLPCEHVFHTQCIDTWMTTMKASCPLCN).

The protein localises to the membrane. Functionally, has a role in meiosis. This chain is RING finger protein mug145 (mug145), found in Schizosaccharomyces pombe (strain 972 / ATCC 24843) (Fission yeast).